Consider the following 70-residue polypeptide: UPF0352 protein PSHAa1818 (70 aa).

The protein belongs to the UPF0352 family.

This is UPF0352 protein PSHAa1818 from Pseudoalteromonas translucida (strain TAC 125).